Reading from the N-terminus, the 589-residue chain is Kelch-like protein 25 (589 aa).

Residues 46–114 form the BTB domain; that stretch reads TDVTLWAGNR…AYSSKIIINE (69 aa). The region spanning 149-250 is the BACK domain; that stretch reads CLGMMILSDA…LPSELLKEAV (102 aa). 6 Kelch repeats span residues 296 to 340, 341 to 388, 389 to 444, 446 to 492, 493 to 538, and 539 to 585; these read TLLI…AIGC, KVYV…ELEN, CLYV…SAKL, LFAF…VLGS, QIFI…ASGN, and KVYV…STWK.

As to quaternary structure, component of the BCR(KLHL25) E3 ubiquitin ligase complex, at least composed of cul3, klhl25 and rbx1.

It participates in protein modification; protein ubiquitination. In terms of biological role, substrate-specific adapter of a BCR (BTB-CUL3-RBX1) E3 ubiquitin ligase complex involved in various processes, such as translation homeostasis and lipid synthesis. The BCR(KLHL25) ubiquitin ligase complex acts by mediating ubiquitination of hypophosphorylated eif4ebp1 (4E-BP1): ubiquitination and subsequent degradation of hypophosphorylated EIF4EBP1 (4E-BP1) probably serves as a homeostatic mechanism to maintain translation and prevent eIF4E inhibition when eIF4E levels are low. The BCR(KLHL25) complex also acts as a regulator of lipid synthesis by mediating ubiquitination and degradation of ACLY, thereby inhibiting lipid synthesis. The sequence is that of Kelch-like protein 25 from Xenopus tropicalis (Western clawed frog).